We begin with the raw amino-acid sequence, 901 residues long: HTH-type transcriptional regulator MalT (901 aa).

39 to 46 (SPAGYGKT) contacts ATP. An HTH luxR-type domain is found at 829–894 (ELIRTSPLTQ…AAVQHAQKLL (66 aa)). Residues 853–872 (NEQIAGELEVAATTIKTHIR) constitute a DNA-binding region (H-T-H motif).

The protein belongs to the MalT family. In terms of assembly, monomer in solution. Oligomerizes to an active state in the presence of the positive effectors ATP and maltotriose.

Activated by ATP and maltotriose, which are both required for DNA binding. Its function is as follows. Positively regulates the transcription of the maltose regulon whose gene products are responsible for uptake and catabolism of malto-oligosaccharides. Specifically binds to the promoter region of its target genes, recognizing a short DNA motif called the MalT box. This is HTH-type transcriptional regulator MalT from Shigella flexneri serotype 5b (strain 8401).